A 282-amino-acid polypeptide reads, in one-letter code: Putative 4-diphosphocytidyl-2-C-methyl-D-erythritol kinase (282 aa).

Lysine 9 is an active-site residue. 93–103 (PVSAGLAGGSA) contacts ATP. Aspartate 135 is an active-site residue.

The protein belongs to the GHMP kinase family. IspE subfamily.

It catalyses the reaction 4-CDP-2-C-methyl-D-erythritol + ATP = 4-CDP-2-C-methyl-D-erythritol 2-phosphate + ADP + H(+). Functionally, catalyzes the phosphorylation of the position 2 hydroxy group of 4-diphosphocytidyl-2C-methyl-D-erythritol. The chain is Putative 4-diphosphocytidyl-2-C-methyl-D-erythritol kinase from Staphylococcus aureus (strain MRSA252).